We begin with the raw amino-acid sequence, 320 residues long: Lipoyl synthase (320 aa).

The [4Fe-4S] cluster site is built by Cys67, Cys72, Cys78, Cys93, Cys97, Cys100, and Ser307. In terms of domain architecture, Radical SAM core spans 79-296; it reads FNHGTATFMI…REKAAEMGFE (218 aa).

Belongs to the radical SAM superfamily. Lipoyl synthase family. The cofactor is [4Fe-4S] cluster.

The protein resides in the cytoplasm. The catalysed reaction is [[Fe-S] cluster scaffold protein carrying a second [4Fe-4S](2+) cluster] + N(6)-octanoyl-L-lysyl-[protein] + 2 oxidized [2Fe-2S]-[ferredoxin] + 2 S-adenosyl-L-methionine + 4 H(+) = [[Fe-S] cluster scaffold protein] + N(6)-[(R)-dihydrolipoyl]-L-lysyl-[protein] + 4 Fe(3+) + 2 hydrogen sulfide + 2 5'-deoxyadenosine + 2 L-methionine + 2 reduced [2Fe-2S]-[ferredoxin]. Its pathway is protein modification; protein lipoylation via endogenous pathway; protein N(6)-(lipoyl)lysine from octanoyl-[acyl-carrier-protein]: step 2/2. In terms of biological role, catalyzes the radical-mediated insertion of two sulfur atoms into the C-6 and C-8 positions of the octanoyl moiety bound to the lipoyl domains of lipoate-dependent enzymes, thereby converting the octanoylated domains into lipoylated derivatives. This chain is Lipoyl synthase, found in Actinobacillus succinogenes (strain ATCC 55618 / DSM 22257 / CCUG 43843 / 130Z).